The chain runs to 281 residues: MSTSANRSTPSARTVFFISDGTGITAETFGHSVLTQFDLRFKQIRLPFIDTLDKAHDALRKINDAYELDGQRPIIFSTLVKANLSKVVRQSKGMHMDLIQTFVEPLEQELGVKSTHTIGRSHTSTDSEEYKNRIEAINFSLAHDDGQSNKNLAEADVILVGVSRSGKTPTSLFLAMQYGIKAANYPLIPDDFAREKLPGGLLEYKSKIFGLSIAPDRLAEIRNERLPGSKYAALANCRYEVNEAEKMMRREGIRWMSSTTKSIEEISATILQEIKSEHRTD.

161-168 (GVSRSGKT) serves as a coordination point for ADP.

Belongs to the pyruvate, phosphate/water dikinase regulatory protein family. PSRP subfamily.

It catalyses the reaction [pyruvate, water dikinase] + ADP = [pyruvate, water dikinase]-phosphate + AMP + H(+). It carries out the reaction [pyruvate, water dikinase]-phosphate + phosphate + H(+) = [pyruvate, water dikinase] + diphosphate. Functionally, bifunctional serine/threonine kinase and phosphorylase involved in the regulation of the phosphoenolpyruvate synthase (PEPS) by catalyzing its phosphorylation/dephosphorylation. The polypeptide is Putative phosphoenolpyruvate synthase regulatory protein (Herminiimonas arsenicoxydans).